A 433-amino-acid chain; its full sequence is Myricetin 3-O-glucosyl 1,2-rhamnoside 6'-O-caffeoyltransferase AT1 (433 aa).

Active-site proton acceptor residues include histidine 157 and aspartate 375.

It belongs to the plant acyltransferase family. As to expression, expressed in young cromes.

It carries out the reaction myricetin 3-O-[beta-D-glucosyl-(1-&gt;2)-alpha-L-rhamnoside] + (E)-caffeoyl-CoA = myricetin 3-O-[(6-O-(E)-caffeoyl-beta-D-glucosyl)-(1-&gt;2)-alpha-L-rhamnoside] + CoA. It functions in the pathway flavonoid metabolism. Its function is as follows. Caffeoyltransferase involved in montbretin A (MbA) biosynthesis. Catalyzes the caffeoylation of myricetin 3-O-beta-D-glucosyl 1,2-alpha-L-rhamnoside (MRG) to produce myricetin 3-O-(6'-O-caffeoyl)-beta-D-glucosyl 1,2-alpha-L-rhamnoside (mini-MbA), a precursor of MbA. Mini-MbA and MbA are potent inhibitors of human pancreatic alpha-amylase and are being developed as drug candidates to treat type-2 diabetes. In vitro, is able to catalyze the caffeoylation of quercetin 3-O-sophoroside (QGG), although QGG may not be a physiological substrate in vivo. In vitro, can use coumaryl-CoA, feruloyl-CoA and acetyl-CoA, although these three acyl donors may not be physiological in vivo. The polypeptide is Myricetin 3-O-glucosyl 1,2-rhamnoside 6'-O-caffeoyltransferase AT1 (Crocosmia x crocosmiiflora (Montbretia)).